Here is a 677-residue protein sequence, read N- to C-terminus: Methionine--tRNA ligase (677 aa).

The 'HIGH' region signature appears at 15-25; it reads PYANGSIHLGH. Residues cysteine 146, cysteine 149, cysteine 159, and cysteine 162 each coordinate Zn(2+). Residues 333-337 carry the 'KMSKS' region motif; it reads KMSKS. Lysine 336 serves as a coordination point for ATP. The tRNA-binding domain occupies 575-677; sequence DFAKIDLRVA…DGAKPGQQVK (103 aa).

The protein belongs to the class-I aminoacyl-tRNA synthetase family. MetG type 1 subfamily. In terms of assembly, homodimer. It depends on Zn(2+) as a cofactor.

The protein localises to the cytoplasm. It catalyses the reaction tRNA(Met) + L-methionine + ATP = L-methionyl-tRNA(Met) + AMP + diphosphate. In terms of biological role, is required not only for elongation of protein synthesis but also for the initiation of all mRNA translation through initiator tRNA(fMet) aminoacylation. This Salmonella paratyphi B (strain ATCC BAA-1250 / SPB7) protein is Methionine--tRNA ligase.